A 410-amino-acid polypeptide reads, in one-letter code: Aspartate aminotransferase (410 aa).

L-aspartate contacts are provided by Gly-47, Trp-135, and Asn-185. Lys-249 bears the N6-(pyridoxal phosphate)lysine mark. Residue Arg-385 participates in L-aspartate binding.

Belongs to the class-I pyridoxal-phosphate-dependent aminotransferase family. Homodimer. Requires pyridoxal 5'-phosphate as cofactor.

The protein localises to the cytoplasm. It catalyses the reaction L-aspartate + 2-oxoglutarate = oxaloacetate + L-glutamate. Functionally, catalyzes the reversible conversion of aspartate and 2-oxoglutarate to glutamate and oxaloacetate. The protein is Aspartate aminotransferase of Rhizobium meliloti (Ensifer meliloti).